The primary structure comprises 449 residues: Methionine aminopeptidase 2-2 (449 aa).

Positions 1-91 (MAAQAAPELA…PRIPLTTLFP (91 aa)) are disordered. Residues 15–28 (NKNTGSAEASTVPA) are compositionally biased toward polar residues. Residues 34 to 50 (DDAENEGDSDDDRDDEQ) show a composition bias toward acidic residues. Positions 61-75 (KKKKKKRPKKKKKTA) are enriched in basic residues. Residue His-199 participates in substrate binding. A divalent metal cation contacts are provided by Asp-219, Asp-230, and His-299. Substrate is bound at residue His-307. 2 residues coordinate a divalent metal cation: Glu-335 and Glu-430.

This sequence belongs to the peptidase M24A family. Methionine aminopeptidase eukaryotic type 2 subfamily. Co(2+) serves as cofactor. Requires Zn(2+) as cofactor. It depends on Mn(2+) as a cofactor. The cofactor is Fe(2+).

It is found in the cytoplasm. It carries out the reaction Release of N-terminal amino acids, preferentially methionine, from peptides and arylamides.. Cotranslationally removes the N-terminal methionine from nascent proteins. The N-terminal methionine is often cleaved when the second residue in the primary sequence is small and uncharged (Met-Ala-, Cys, Gly, Pro, Ser, Thr, or Val). This chain is Methionine aminopeptidase 2-2, found in Arthroderma gypseum (strain ATCC MYA-4604 / CBS 118893) (Microsporum gypseum).